A 292-amino-acid polypeptide reads, in one-letter code: MATMDFSKGHGTQNDFVVLPDLDVRVDLEPARVSALCDRQRGLGADGILRVARAGALADAGVLGALPDGVAAEDWFMDYRNSDGSIAEMCGNGVRVFAHYLKASGLESKDEFVVGSRAGARPVVVHGYDATHGDVTVAMGPIKDLGTSSATIDGRVFAGVGIDVGNPHLACVDEHVTAEVLSALDLSVSPGFDPGFFPHGVNIEIVTPIHDGGVHMRVHERGVGETRSCGTGTVAAAAAALKFDGRDEGSVLVRVLGGEVQVTVEGGEGSLRGPSVLVANGTISDAWWQSLV.

Positions 14 and 81 each coordinate substrate. The Proton donor role is filled by Cys90. Residues Gly91 to Asn92, Asn166, Asn202, and Glu220 to Arg221 contribute to the substrate site. Cys229 serves as the catalytic Proton acceptor. Residue Gly230–Thr231 coordinates substrate.

It belongs to the diaminopimelate epimerase family. Homodimer.

It is found in the cytoplasm. It catalyses the reaction (2S,6S)-2,6-diaminopimelate = meso-2,6-diaminopimelate. It participates in amino-acid biosynthesis; L-lysine biosynthesis via DAP pathway; DL-2,6-diaminopimelate from LL-2,6-diaminopimelate: step 1/1. In terms of biological role, catalyzes the stereoinversion of LL-2,6-diaminopimelate (L,L-DAP) to meso-diaminopimelate (meso-DAP), a precursor of L-lysine and an essential component of the bacterial peptidoglycan. The polypeptide is Diaminopimelate epimerase (Rhodococcus erythropolis (strain PR4 / NBRC 100887)).